The chain runs to 286 residues: 2-hydroxy-6-oxo-6-phenylhexa-2,4-dienoate hydrolase (286 aa).

Residues 42–43 (GG), Asn-51, Asn-111, Ser-180, and Arg-190 contribute to the substrate site. His-265 functions as the Proton acceptor in the catalytic mechanism. Trp-266 serves as a coordination point for substrate.

This sequence belongs to the AB hydrolase superfamily. BphD family. As to quaternary structure, homodimer.

The enzyme catalyses 2,6-dioxo-6-phenylhexa-3-enoate + H2O = 2-oxopent-4-enoate + benzoate + H(+). Its pathway is xenobiotic degradation; biphenyl degradation; 2-hydroxy-2,4-pentadienoate and benzoate from biphenyl: step 4/4. Functionally, catalyzes an unusual C-C bond hydrolysis of 2-hydroxy-6-oxo-6-phenylhexa-2,4-dienoic acid (HOPDA) to produce benzoic acid and 2-hydroxy-2,4-pentadienoic acid (HPD). In Polaromonas naphthalenivorans (strain CJ2), this protein is 2-hydroxy-6-oxo-6-phenylhexa-2,4-dienoate hydrolase.